A 179-amino-acid chain; its full sequence is Pyridoxal 5'-phosphate synthase subunit PdxT (179 aa).

48 to 50 (GES) contributes to the L-glutamine binding site. Residue Cys79 is the Nucleophile of the active site. L-glutamine-binding positions include Arg101 and 127–128 (IR). Residues His163 and Glu165 each act as charge relay system in the active site.

The protein belongs to the glutaminase PdxT/SNO family. In terms of assembly, in the presence of PdxS, forms a dodecamer of heterodimers. Only shows activity in the heterodimer.

It carries out the reaction aldehydo-D-ribose 5-phosphate + D-glyceraldehyde 3-phosphate + L-glutamine = pyridoxal 5'-phosphate + L-glutamate + phosphate + 3 H2O + H(+). The catalysed reaction is L-glutamine + H2O = L-glutamate + NH4(+). Its pathway is cofactor biosynthesis; pyridoxal 5'-phosphate biosynthesis. Functionally, catalyzes the hydrolysis of glutamine to glutamate and ammonia as part of the biosynthesis of pyridoxal 5'-phosphate. The resulting ammonia molecule is channeled to the active site of PdxS. This Francisella tularensis subsp. novicida (strain U112) protein is Pyridoxal 5'-phosphate synthase subunit PdxT.